Here is a 338-residue protein sequence, read N- to C-terminus: Ketol-acid reductoisomerase (NADP(+)) (338 aa).

The KARI N-terminal Rossmann domain occupies 1 to 181 (MNVYYDKDCD…GGGRSGIIET (181 aa)). NADP(+)-binding positions include 24–27 (YGSQ), Arg-47, Ser-50, Ser-52, and 82–85 (DEFQ). The active site involves His-107. Gly-133 serves as a coordination point for NADP(+). The KARI C-terminal knotted domain maps to 182–327 (TFKDETETDL…AKLRGMMPWI (146 aa)). Mg(2+)-binding residues include Asp-190, Glu-194, Glu-226, and Glu-230. Substrate is bound at residue Ser-251.

The protein belongs to the ketol-acid reductoisomerase family. The cofactor is Mg(2+).

The enzyme catalyses (2R)-2,3-dihydroxy-3-methylbutanoate + NADP(+) = (2S)-2-acetolactate + NADPH + H(+). It carries out the reaction (2R,3R)-2,3-dihydroxy-3-methylpentanoate + NADP(+) = (S)-2-ethyl-2-hydroxy-3-oxobutanoate + NADPH + H(+). It participates in amino-acid biosynthesis; L-isoleucine biosynthesis; L-isoleucine from 2-oxobutanoate: step 2/4. The protein operates within amino-acid biosynthesis; L-valine biosynthesis; L-valine from pyruvate: step 2/4. Functionally, involved in the biosynthesis of branched-chain amino acids (BCAA). Catalyzes an alkyl-migration followed by a ketol-acid reduction of (S)-2-acetolactate (S2AL) to yield (R)-2,3-dihydroxy-isovalerate. In the isomerase reaction, S2AL is rearranged via a Mg-dependent methyl migration to produce 3-hydroxy-3-methyl-2-ketobutyrate (HMKB). In the reductase reaction, this 2-ketoacid undergoes a metal-dependent reduction by NADPH to yield (R)-2,3-dihydroxy-isovalerate. The protein is Ketol-acid reductoisomerase (NADP(+)) of Psychrobacter arcticus (strain DSM 17307 / VKM B-2377 / 273-4).